A 702-amino-acid chain; its full sequence is Ribosomal RNA large subunit methyltransferase K/L (702 aa).

The 112-residue stretch at 43–154 (LVYQSLMWSR…KETASIALDL (112 aa)) folds into the THUMP domain.

It belongs to the methyltransferase superfamily. RlmKL family.

The protein localises to the cytoplasm. The enzyme catalyses guanosine(2445) in 23S rRNA + S-adenosyl-L-methionine = N(2)-methylguanosine(2445) in 23S rRNA + S-adenosyl-L-homocysteine + H(+). It carries out the reaction guanosine(2069) in 23S rRNA + S-adenosyl-L-methionine = N(2)-methylguanosine(2069) in 23S rRNA + S-adenosyl-L-homocysteine + H(+). Specifically methylates the guanine in position 2445 (m2G2445) and the guanine in position 2069 (m7G2069) of 23S rRNA. In Shigella flexneri serotype 5b (strain 8401), this protein is Ribosomal RNA large subunit methyltransferase K/L.